A 468-amino-acid chain; its full sequence is 3-isopropylmalate dehydratase large subunit (468 aa).

C349, C409, and C412 together coordinate [4Fe-4S] cluster.

The protein belongs to the aconitase/IPM isomerase family. LeuC type 1 subfamily. As to quaternary structure, heterodimer of LeuC and LeuD. [4Fe-4S] cluster is required as a cofactor.

The catalysed reaction is (2R,3S)-3-isopropylmalate = (2S)-2-isopropylmalate. It participates in amino-acid biosynthesis; L-leucine biosynthesis; L-leucine from 3-methyl-2-oxobutanoate: step 2/4. In terms of biological role, catalyzes the isomerization between 2-isopropylmalate and 3-isopropylmalate, via the formation of 2-isopropylmaleate. This Roseobacter denitrificans (strain ATCC 33942 / OCh 114) (Erythrobacter sp. (strain OCh 114)) protein is 3-isopropylmalate dehydratase large subunit.